The chain runs to 491 residues: Cysteine--tRNA ligase (491 aa).

Residue Cys31 coordinates Zn(2+). The short motif at 33–43 is the 'HIGH' region element; that stretch reads PTVYGDAHLGH. Positions 226, 251, and 255 each coordinate Zn(2+). The 'KMSKS' region motif lies at 283–287; the sequence is KMGKS. Position 286 (Lys286) interacts with ATP.

The protein belongs to the class-I aminoacyl-tRNA synthetase family. As to quaternary structure, monomer. It depends on Zn(2+) as a cofactor.

Its subcellular location is the cytoplasm. It carries out the reaction tRNA(Cys) + L-cysteine + ATP = L-cysteinyl-tRNA(Cys) + AMP + diphosphate. The polypeptide is Cysteine--tRNA ligase (Bacteroides fragilis (strain ATCC 25285 / DSM 2151 / CCUG 4856 / JCM 11019 / LMG 10263 / NCTC 9343 / Onslow / VPI 2553 / EN-2)).